A 1058-amino-acid polypeptide reads, in one-letter code: Ubiquitin-like modifier-activating enzyme 1 (1058 aa).

Residues 1-46 are disordered; sequence MSSSPLSKKRRVSGPDPKPGSNCSPAQSALSEVSSVPTNGMAKNGS. Residue S2 is modified to N-acetylserine. Phosphoserine occurs at positions 4, 13, 21, 24, and 46. A compositionally biased stretch (polar residues) spans 21–38; sequence SNCSPAQSALSEVSSVPT. Y55 carries the phosphotyrosine modification. 2 repeat units span residues 63-199 and 459-611. The tract at residues 63-611 is 2 approximate repeats; the sequence is GHEAMKMLQT…GTKGNVQVVI (549 aa). ATP is bound by residues A478, D504, R515, K528, and 576–577; that span reads DN. Position 528 is an N6-succinyllysine (K528). C632 (glycyl thioester intermediate) is an active-site residue. K671 carries the post-translational modification N6-acetyllysine. Position 800 is a phosphothreonine (T800). Residues S810, S816, S820, and S835 each carry the phosphoserine modification. At K980 the chain carries N6-acetyllysine.

It belongs to the ubiquitin-activating E1 family. Monomer. Interacts with GAN (via BTB domain). In terms of processing, ISGylated. Ubiquitously expressed. In testis, expressed in A spermatogonia and spermatids but at very low levels in pachytene spermatocytes.

It is found in the cytoplasm. The protein localises to the mitochondrion. It localises to the nucleus. The enzyme catalyses ATP + ubiquitin + [E1 ubiquitin-activating enzyme]-L-cysteine = AMP + diphosphate + S-ubiquitinyl-[E1 ubiquitin-activating enzyme]-L-cysteine.. It participates in protein modification; protein ubiquitination. In terms of biological role, catalyzes the first step in ubiquitin conjugation to mark cellular proteins for degradation through the ubiquitin-proteasome system. Activates ubiquitin by first adenylating its C-terminal glycine residue with ATP, and thereafter linking this residue to the side chain of a cysteine residue in E1, yielding a ubiquitin-E1 thioester and free AMP. Essential for the formation of radiation-induced foci, timely DNA repair and for response to replication stress. Promotes the recruitment of TP53BP1 and BRCA1 at DNA damage sites. The protein is Ubiquitin-like modifier-activating enzyme 1 (Uba1) of Mus musculus (Mouse).